The chain runs to 470 residues: Membrane-bound lytic murein transglycosylase F (470 aa).

A signal peptide spans 1 to 21 (MLKEKLIIIITLVMLLCACDI). Residues 22–259 (QEQSTQLAQI…VLEEKYFGHV (238 aa)) form a non-LT domain region. Residues 260 to 470 (RQFNYVNTLA…PKIGDEVEAK (211 aa)) are LT domain. Glutamate 304 is an active-site residue.

The protein in the N-terminal section; belongs to the bacterial solute-binding protein 3 family. It in the C-terminal section; belongs to the transglycosylase Slt family.

The protein resides in the cell outer membrane. It carries out the reaction Exolytic cleavage of the (1-&gt;4)-beta-glycosidic linkage between N-acetylmuramic acid (MurNAc) and N-acetylglucosamine (GlcNAc) residues in peptidoglycan, from either the reducing or the non-reducing ends of the peptidoglycan chains, with concomitant formation of a 1,6-anhydrobond in the MurNAc residue.. In terms of biological role, murein-degrading enzyme that degrades murein glycan strands and insoluble, high-molecular weight murein sacculi, with the concomitant formation of a 1,6-anhydromuramoyl product. Lytic transglycosylases (LTs) play an integral role in the metabolism of the peptidoglycan (PG) sacculus. Their lytic action creates space within the PG sacculus to allow for its expansion as well as for the insertion of various structures such as secretion systems and flagella. The sequence is that of Membrane-bound lytic murein transglycosylase F from Pseudoalteromonas translucida (strain TAC 125).